We begin with the raw amino-acid sequence, 481 residues long: Aspartyl/glutamyl-tRNA(Asn/Gln) amidotransferase subunit B (481 aa).

The protein belongs to the GatB/GatE family. GatB subfamily. As to quaternary structure, heterotrimer of A, B and C subunits.

The enzyme catalyses L-glutamyl-tRNA(Gln) + L-glutamine + ATP + H2O = L-glutaminyl-tRNA(Gln) + L-glutamate + ADP + phosphate + H(+). The catalysed reaction is L-aspartyl-tRNA(Asn) + L-glutamine + ATP + H2O = L-asparaginyl-tRNA(Asn) + L-glutamate + ADP + phosphate + 2 H(+). In terms of biological role, allows the formation of correctly charged Asn-tRNA(Asn) or Gln-tRNA(Gln) through the transamidation of misacylated Asp-tRNA(Asn) or Glu-tRNA(Gln) in organisms which lack either or both of asparaginyl-tRNA or glutaminyl-tRNA synthetases. The reaction takes place in the presence of glutamine and ATP through an activated phospho-Asp-tRNA(Asn) or phospho-Glu-tRNA(Gln). This chain is Aspartyl/glutamyl-tRNA(Asn/Gln) amidotransferase subunit B, found in Pseudomonas aeruginosa (strain LESB58).